The primary structure comprises 166 residues: Short form salivary protein D7R5 (166 aa).

Residues methionine 1–alanine 22 form the signal peptide. Disulfide bonds link cysteine 26–cysteine 58, cysteine 39–cysteine 166, and cysteine 98–cysteine 117.

This sequence belongs to the PBP/GOBP family.

Its subcellular location is the secreted. Its function is as follows. In contrast to the related D7 salivary proteins, does not bind biogenic amines such as serotonin, noradrenaline, histamine and adrenaline. It is hypothesized that either D7r5 evolved an as yet unknown function or is becoming a pseudogene. The sequence is that of Short form salivary protein D7R5 from Anopheles gambiae (African malaria mosquito).